A 78-amino-acid chain; its full sequence is Acyl carrier protein (78 aa).

One can recognise a Carrier domain in the interval 2–77 (SDTEERVKKI…DAVKFIDKAS (76 aa)). Ser-37 bears the O-(pantetheine 4'-phosphoryl)serine mark.

Belongs to the acyl carrier protein (ACP) family. Post-translationally, 4'-phosphopantetheine is transferred from CoA to a specific serine of apo-ACP by AcpS. This modification is essential for activity because fatty acids are bound in thioester linkage to the sulfhydryl of the prosthetic group.

The protein resides in the cytoplasm. It functions in the pathway lipid metabolism; fatty acid biosynthesis. Functionally, carrier of the growing fatty acid chain in fatty acid biosynthesis. The protein is Acyl carrier protein of Bartonella bacilliformis (strain ATCC 35685 / KC583 / Herrer 020/F12,63).